Reading from the N-terminus, the 223-residue chain is Deoxyribose-phosphate aldolase (223 aa).

The Proton donor/acceptor role is filled by D89. The active-site Schiff-base intermediate with acetaldehyde is the K152. K181 functions as the Proton donor/acceptor in the catalytic mechanism.

It belongs to the DeoC/FbaB aldolase family. DeoC type 1 subfamily.

It is found in the cytoplasm. The enzyme catalyses 2-deoxy-D-ribose 5-phosphate = D-glyceraldehyde 3-phosphate + acetaldehyde. Its pathway is carbohydrate degradation; 2-deoxy-D-ribose 1-phosphate degradation; D-glyceraldehyde 3-phosphate and acetaldehyde from 2-deoxy-alpha-D-ribose 1-phosphate: step 2/2. Catalyzes a reversible aldol reaction between acetaldehyde and D-glyceraldehyde 3-phosphate to generate 2-deoxy-D-ribose 5-phosphate. The chain is Deoxyribose-phosphate aldolase from Bacillus cereus (strain ZK / E33L).